Here is a 719-residue protein sequence, read N- to C-terminus: Protein lin-15A (719 aa).

Disordered regions lie at residues 179-199 (FSHFPSEPSPSKPRATREGSQ), 419-464 (YRDH…SISW), 559-626 (LTTA…PTKT), and 684-719 (AKQVAAAPSEPKHIPPTHMEKKPEELLMDPKPEPIF). Positions 570 to 579 (STSTDSSSSS) are enriched in low complexity. Residues 604-617 (LLQNKPTHVESSSP) are compositionally biased toward polar residues. Residues 693–719 (EPKHIPPTHMEKKPEELLMDPKPEPIF) show a composition bias toward basic and acidic residues.

It localises to the nucleus. Synthetic multivulva (synMuv) class A protein. SynMuv proteins are required to repress the induction of vulval development. Acts redundantly with SynMuv class B protein lin-15B, and lin-35 to negatively regulate vulval development, most likely through antagonization of the Ras-signaling pathway. May also negatively regulate vulval development in association with other SynMuv class B proteins such as dpl-1 and efl-1. Regulates let-23 basal activity. Required for the correct expression and/or stability of lin-56. The protein is Protein lin-15A of Caenorhabditis elegans.